The chain runs to 61 residues: Small ribosomal subunit protein uS14 (61 aa).

Zn(2+) is bound by residues Cys-24, Cys-27, Cys-40, and Cys-43.

Belongs to the universal ribosomal protein uS14 family. Zinc-binding uS14 subfamily. In terms of assembly, part of the 30S ribosomal subunit. Contacts proteins S3 and S10. It depends on Zn(2+) as a cofactor.

Its function is as follows. Binds 16S rRNA, required for the assembly of 30S particles and may also be responsible for determining the conformation of the 16S rRNA at the A site. This is Small ribosomal subunit protein uS14 from Clostridium kluyveri (strain NBRC 12016).